The primary structure comprises 909 residues: Zinc finger and BTB domain-containing protein 41 (909 aa).

Residues 88-152 form the BTB domain; it reads CDLLIIVEGK…LYTSEFFVYK (65 aa). The segment at 207-230 adopts a C2H2-type 1 zinc-finger fold; sequence HQCKFCSRHFCYKKSLENHLAKTH. Residues 252 to 344 form a disordered region; sequence RSKRNRKCPV…PEAGDSVGNV (93 aa). The segment covering 266–275 has biased composition (acidic residues); sequence TSDDEQESGD. A compositionally biased stretch (basic and acidic residues) spans 284–295; sequence NFDKEKSDRNDS. A compositionally biased stretch (acidic residues) spans 296-322; that stretch reads EDPGSEYNAEEDELEEEMSDEYSDIEE. 13 consecutive C2H2-type zinc fingers follow at residues 361-383, 389-411, 422-445, 463-485, 491-514, 518-541, 547-569, 575-597, 603-625, 631-654, 668-690, 696-718, and 724-747; these read LQCP…TRVH, FECD…RKKH, HKCP…KRFH, WKCD…MILH, FKCT…EKFH, FPCD…ECTH, WTCF…LRIH, HLCS…LRVH, YECD…KKIH, HQCE…KSVH, HQCD…FRTH, YKCQ…LVIH, and FNCQ…DHVH.

It is found in the nucleus. Functionally, may be involved in transcriptional regulation. In Homo sapiens (Human), this protein is Zinc finger and BTB domain-containing protein 41 (ZBTB41).